The sequence spans 309 residues: Branched-chain-amino-acid aminotransferase (309 aa).

Residue lysine 160 is modified to N6-(pyridoxal phosphate)lysine.

This sequence belongs to the class-IV pyridoxal-phosphate-dependent aminotransferase family. As to quaternary structure, homohexamer. Pyridoxal 5'-phosphate serves as cofactor.

It catalyses the reaction L-leucine + 2-oxoglutarate = 4-methyl-2-oxopentanoate + L-glutamate. The enzyme catalyses L-isoleucine + 2-oxoglutarate = (S)-3-methyl-2-oxopentanoate + L-glutamate. It carries out the reaction L-valine + 2-oxoglutarate = 3-methyl-2-oxobutanoate + L-glutamate. It functions in the pathway amino-acid biosynthesis; L-isoleucine biosynthesis; L-isoleucine from 2-oxobutanoate: step 4/4. The protein operates within amino-acid biosynthesis; L-leucine biosynthesis; L-leucine from 3-methyl-2-oxobutanoate: step 4/4. Its pathway is amino-acid biosynthesis; L-valine biosynthesis; L-valine from pyruvate: step 4/4. Functionally, acts on leucine, isoleucine and valine. The chain is Branched-chain-amino-acid aminotransferase (ilvE) from Escherichia coli O157:H7.